The following is a 465-amino-acid chain: Tapasin (465 aa).

The N-terminal stretch at 1 to 23 (MKPLLLLVAVALGLATVVSVVSA) is a signal peptide. Residues 24–416 (GPEAIECWFV…GFSGPSIEDG (393 aa)) lie on the Lumenal side of the membrane. Cys-30 and Cys-94 are disulfide-bonded. The N-linked (GlcNAc...) asparagine glycan is linked to Asn-256. An Ig-like C1-type domain is found at 295-402 (PRVSLTPAPV…PASGRSADVT (108 aa)). A disulfide bridge links Cys-318 with Cys-385. Residues 417-437 (IGLFLSAFLLLGLLKVLGWLA) form a helical membrane-spanning segment. The Cytoplasmic segment spans residues 438–465 (AYWTIPEVSKEKATAASLTIPRNSKKSQ).

Heterodimer with PDIA3; disulfide-linked. Obligatory mediator for the interaction between newly assembled MHC class I molecules, calreticulin, PDIA3 and TAP. Up to 4 MHC class I/tapasin complexes bind to 1 TAP. Interacts with HLA-G-B2M complex; this interaction is required for loading of high affinity peptides. On its own or as part of MHC class I peptide loading complex, interacts with ligand-free MR1 or MR1-B2M complex, providing for stable MR1 pools ready for metabolite antigen processing.

The protein localises to the endoplasmic reticulum membrane. Its function is as follows. Involved in the association of MHC class I with transporter associated with antigen processing (TAP) and in the assembly of MHC class I with peptide (peptide loading). This chain is Tapasin (Tapbp), found in Mus musculus (Mouse).